Here is a 169-residue protein sequence, read N- to C-terminus: Ribosome maturation factor RimM (169 aa).

A PRC barrel domain is found at 96–169 (DGEYYWADLI…RILVDWGLDY (74 aa)).

This sequence belongs to the RimM family. As to quaternary structure, binds ribosomal protein uS19.

Its subcellular location is the cytoplasm. In terms of biological role, an accessory protein needed during the final step in the assembly of 30S ribosomal subunit, possibly for assembly of the head region. Essential for efficient processing of 16S rRNA. May be needed both before and after RbfA during the maturation of 16S rRNA. It has affinity for free ribosomal 30S subunits but not for 70S ribosomes. This Chromobacterium violaceum (strain ATCC 12472 / DSM 30191 / JCM 1249 / CCUG 213 / NBRC 12614 / NCIMB 9131 / NCTC 9757 / MK) protein is Ribosome maturation factor RimM.